The sequence spans 496 residues: Lysine--tRNA ligase (496 aa).

Positions 408 and 415 each coordinate Mg(2+).

The protein belongs to the class-II aminoacyl-tRNA synthetase family. Homodimer. Mg(2+) is required as a cofactor.

It localises to the cytoplasm. The catalysed reaction is tRNA(Lys) + L-lysine + ATP = L-lysyl-tRNA(Lys) + AMP + diphosphate. The protein is Lysine--tRNA ligase of Legionella pneumophila (strain Lens).